The sequence spans 599 residues: Prostaglandin G/H synthase 1 (599 aa).

An N-terminal signal peptide occupies residues 1 to 23 (MSRSLLLWFLLFLLLLPPLPVLL). The 39-residue stretch at 31 to 69 (PVNPCCYYPCQHQGICVRFGLDRYQCDCTRTGYSGPNCT) folds into the EGF-like domain. Disulfide bonds link C35–C46, C36–C158, C40–C56, and C58–C68. Residues N67, N103, and N143 are each glycosylated (N-linked (GlcNAc...) asparagine). The Proton acceptor role is filled by H206. Y384 serves as the catalytic For cyclooxygenase activity. H387 is a binding site for heme b. An intrachain disulfide couples C568 to C574.

The protein belongs to the prostaglandin G/H synthase family. As to quaternary structure, homodimer. The cofactor is heme b.

It is found in the microsome membrane. The protein resides in the endoplasmic reticulum membrane. The enzyme catalyses (5Z,8Z,11Z,14Z)-eicosatetraenoate + AH2 + 2 O2 = prostaglandin H2 + A + H2O. It catalyses the reaction (5Z,8Z,11Z,14Z)-eicosatetraenoate + 2 O2 = prostaglandin G2. The catalysed reaction is prostaglandin G2 + AH2 = prostaglandin H2 + A + H2O. It carries out the reaction (9Z,12Z)-octadecadienoate + AH2 + O2 = (9R)-hydroxy-(10E,12Z)-octadecadienoate + A + H2O. The enzyme catalyses (9Z,12Z)-octadecadienoate + AH2 + O2 = (9S)-hydroxy-(10E,12Z)-octadecadienoate + A + H2O. It catalyses the reaction (9Z,12Z)-octadecadienoate + AH2 + O2 = (13S)-hydroxy-(9Z,11E)-octadecadienoate + A + H2O. The catalysed reaction is (9Z,12Z)-octadecadienoate + AH2 + O2 = (13R)-hydroxy-(9Z,11E)-octadecadienoate + A + H2O. The protein operates within lipid metabolism; prostaglandin biosynthesis. With respect to regulation, the cyclooxygenase activity is inhibited by nonsteroidal anti-inflammatory drugs (NSAIDs) including ibuprofen, flurbiprofen, ketoprofen, naproxen, flurbiprofen, anirolac, fenclofenac and diclofenac. Its function is as follows. Dual cyclooxygenase and peroxidase that plays an important role in the biosynthesis pathway of prostanoids, a class of C20 oxylipins mainly derived from arachidonate ((5Z,8Z,11Z,14Z)-eicosatetraenoate, AA, C20:4(n-6)), with a particular role in the inflammatory response. The cyclooxygenase activity oxygenates AA to the hydroperoxy endoperoxide prostaglandin G2 (PGG2), and the peroxidase activity reduces PGG2 to the hydroxy endoperoxide prostaglandin H2 (PGH2), the precursor of all 2-series prostaglandins and thromboxanes. This complex transformation is initiated by abstraction of hydrogen at carbon 13 (with S-stereochemistry), followed by insertion of molecular O2 to form the endoperoxide bridge between carbon 9 and 11 that defines prostaglandins. The insertion of a second molecule of O2 (bis-oxygenase activity) yields a hydroperoxy group in PGG2 that is then reduced to PGH2 by two electrons. Involved in the constitutive production of prostanoids in particular in the stomach and platelets. In gastric epithelial cells, it is a key step in the generation of prostaglandins, such as prostaglandin E2 (PGE2), which plays an important role in cytoprotection. In platelets, it is involved in the generation of thromboxane A2 (TXA2), which promotes platelet activation and aggregation, vasoconstriction and proliferation of vascular smooth muscle cells. Can also use linoleate (LA, (9Z,12Z)-octadecadienoate, C18:2(n-6)) as substrate and produce hydroxyoctadecadienoates (HODEs) in a regio- and stereospecific manner, being (9R)-HODE ((9R)-hydroxy-(10E,12Z)-octadecadienoate) and (13S)-HODE ((13S)-hydroxy-(9Z,11E)-octadecadienoate) its major products. The chain is Prostaglandin G/H synthase 1 from Homo sapiens (Human).